Consider the following 395-residue polypeptide: Chorismate synthase (395 aa).

Arginine 40 and arginine 46 together coordinate NADP(+). A disordered region spans residues 98 to 120 (LPREGRNAPLSRPRPGHADLTGM). Residues 134 to 136 (RSS), 256 to 257 (QA), glycine 301, 316 to 320 (KPIPS), and arginine 342 contribute to the FMN site.

Belongs to the chorismate synthase family. Homotetramer. FMNH2 serves as cofactor.

It catalyses the reaction 5-O-(1-carboxyvinyl)-3-phosphoshikimate = chorismate + phosphate. Its pathway is metabolic intermediate biosynthesis; chorismate biosynthesis; chorismate from D-erythrose 4-phosphate and phosphoenolpyruvate: step 7/7. Functionally, catalyzes the anti-1,4-elimination of the C-3 phosphate and the C-6 proR hydrogen from 5-enolpyruvylshikimate-3-phosphate (EPSP) to yield chorismate, which is the branch point compound that serves as the starting substrate for the three terminal pathways of aromatic amino acid biosynthesis. This reaction introduces a second double bond into the aromatic ring system. This chain is Chorismate synthase, found in Bifidobacterium longum subsp. infantis (strain ATCC 15697 / DSM 20088 / JCM 1222 / NCTC 11817 / S12).